The following is a 1157-amino-acid chain: Nitric oxide synthase, inducible (1157 aa).

The short motif at Asp23–Asn27 is the DINNN-motif; mediates interaction with SPSB1, SPSB2 and SPSB4 element. The tract at residues Glu29–Ala64 is disordered. Zn(2+)-binding residues include Cys110 and Cys115. Cys200 contributes to the heme b binding site. L-arginine-binding residues include Gln263, Trp372, Tyr373, and Glu377. Residues Arg381, Ile462, Trp463, and Phe476 each contribute to the (6R)-L-erythro-5,6,7,8-tetrahydrobiopterin site. Heme b is bound at residue Tyr491. The calmodulin-binding stretch occupies residues Phe515–Ala535. One can recognise a Flavodoxin-like domain in the interval Ala539–Phe677. Positions 545, 546, 547, 549, 550, 591, 592, 628, 635, 661, and 665 each coordinate FMN. One can recognise an FAD-binding FR-type domain in the interval Lys730–Pro970. Residue Arg750 participates in NADP(+) binding. The FAD site is built by His772, Arg906, Tyr908, Ser909, Thr924, and Ala926. Thr929 contacts NADP(+). Residues Tyr930, Val943, Cys944, and Ser945 each contribute to the FAD site. Residues Thr984, Arg1017, Ser1046, Arg1047, Lys1053, Tyr1055, Gln1057, and Asp1090 each contribute to the NADP(+) site. The tract at residues Lys1138 to Ser1157 is disordered.

The protein belongs to the NOS family. Homodimer. Interacts with NHERF1. Interacts with GAPDH; induced by oxidatively-modified low-densitity lipoprotein (LDL(ox)). Interacts with S100A8 and S100A9 to form the iNOS-S100A8/9 transnitrosylase complex. Interacts with SPSB1, SPSB2 and SPSB4. Interacts with ELOC and CUL5 in the presence of SPSB1 or SPSB2 or SPSB4. Forms a complex with ASL, ASS1 and HSP90AA1; the complex regulates cell-autonomous L-arginine synthesis and citrulline recycling while channeling extracellular L-arginine to nitric oxide synthesis pathway. Heme b serves as cofactor. Requires FAD as cofactor. FMN is required as a cofactor. It depends on (6R)-L-erythro-5,6,7,8-tetrahydrobiopterin as a cofactor. Polyubiquitinated; mediated by SPSB1, SPSB2 and SPSB4, leading to proteasomal degradation. In terms of tissue distribution, detected in both stimulated and unstimulated immune cells and macrophages with little or no up-regulation following cellular stimulation with lipopolysaccharides (LPS) or concanavalin A (ConA).

The protein resides in the cytoplasm. It localises to the cytosol. The catalysed reaction is 2 L-arginine + 3 NADPH + 4 O2 + H(+) = 2 L-citrulline + 2 nitric oxide + 3 NADP(+) + 4 H2O. With respect to regulation, not stimulated by calcium/calmodulin. Produces nitric oxide (NO) which is a messenger molecule with diverse functions throughout the body. In macrophages, NO mediates tumoricidal and bactericidal actions. Also has nitrosylase activity and mediates cysteine S-nitrosylation of cytoplasmic target proteins such PTGS2/COX2. As component of the iNOS-S100A8/9 transnitrosylase complex involved in the selective inflammatory stimulus-dependent S-nitrosylation of GAPDH implicated in regulation of the GAIT complex activity and probably multiple targets including ANXA5, EZR, MSN and VIM. Involved in inflammation, enhances the synthesis of pro-inflammatory mediators such as IL6 and IL8. The sequence is that of Nitric oxide synthase, inducible (NOS2) from Sus scrofa (Pig).